Reading from the N-terminus, the 338-residue chain is Phosphoribosylformylglycinamidine cyclo-ligase (338 aa).

It belongs to the AIR synthase family.

It localises to the cytoplasm. The enzyme catalyses 2-formamido-N(1)-(5-O-phospho-beta-D-ribosyl)acetamidine + ATP = 5-amino-1-(5-phospho-beta-D-ribosyl)imidazole + ADP + phosphate + H(+). It functions in the pathway purine metabolism; IMP biosynthesis via de novo pathway; 5-amino-1-(5-phospho-D-ribosyl)imidazole from N(2)-formyl-N(1)-(5-phospho-D-ribosyl)glycinamide: step 2/2. This is Phosphoribosylformylglycinamidine cyclo-ligase from Lactococcus lactis subsp. lactis (strain IL1403) (Streptococcus lactis).